Here is a 154-residue protein sequence, read N- to C-terminus: Transcriptional repressor NrdR (154 aa).

Residues 3–34 fold into a zinc finger; it reads CPFCNAPDTKVIDSRLATEGAQVRRRRECMSC. One can recognise an ATP-cone domain in the interval 49–139; that stretch reads PRVIKSDGNR…VYRSFQDVNA (91 aa).

Belongs to the NrdR family. Zn(2+) serves as cofactor.

In terms of biological role, negatively regulates transcription of bacterial ribonucleotide reductase nrd genes and operons by binding to NrdR-boxes. This chain is Transcriptional repressor NrdR, found in Hydrogenovibrio crunogenus (strain DSM 25203 / XCL-2) (Thiomicrospira crunogena).